A 448-amino-acid polypeptide reads, in one-letter code: Integrator complex subunit 15 (448 aa).

Belongs to the Integrator subunit 15 family. In terms of assembly, component of the Integrator complex, composed of core subunits INTS1, INTS2, INTS3, INTS4, INTS5, INTS6, INTS7, INTS8, INTS9/RC74, INTS10, INTS11/CPSF3L, INTS12, INTS13, INTS14 and INTS15. The core complex associates with protein phosphatase 2A subunits PPP2CA and PPP2R1A, to form the Integrator-PP2A (INTAC) complex. INTS15 is part of the tail subcomplex, composed of INTS10, INTS13, INTS14 and INTS15.

Its subcellular location is the nucleus. The protein resides in the chromosome. Functionally, component of the integrator complex, a multiprotein complex that terminates RNA polymerase II (Pol II) transcription in the promoter-proximal region of genes. The integrator complex provides a quality checkpoint during transcription elongation by driving premature transcription termination of transcripts that are unfavorably configured for transcriptional elongation: the complex terminates transcription by (1) catalyzing dephosphorylation of the C-terminal domain (CTD) of Pol II subunit POLR2A/RPB1 and SUPT5H/SPT5, (2) degrading the exiting nascent RNA transcript via endonuclease activity and (3) promoting the release of Pol II from bound DNA. The integrator complex is also involved in terminating the synthesis of non-coding Pol II transcripts, such as enhancer RNAs (eRNAs), small nuclear RNAs (snRNAs), telomerase RNAs and long non-coding RNAs (lncRNAs). INTS15 is part of the integrator tail module that acts as a platform for the recruitment of transcription factors at promoters. Within the integrator complex, INTS15 is required to bridge different integrator modules. In Mus musculus (Mouse), this protein is Integrator complex subunit 15.